Here is a 348-residue protein sequence, read N- to C-terminus: Protein RecA (348 aa).

64-71 contributes to the ATP binding site; that stretch reads GPESSGKT. The segment covering 325-335 has biased composition (basic and acidic residues); it reads YEIDGASKEPL. A disordered region spans residues 325–348; sequence YEIDGASKEPLEETEETLSLLDDE. A compositionally biased stretch (acidic residues) spans 336 to 348; the sequence is EETEETLSLLDDE.

It belongs to the RecA family.

The protein resides in the cytoplasm. Functionally, can catalyze the hydrolysis of ATP in the presence of single-stranded DNA, the ATP-dependent uptake of single-stranded DNA by duplex DNA, and the ATP-dependent hybridization of homologous single-stranded DNAs. It interacts with LexA causing its activation and leading to its autocatalytic cleavage. The chain is Protein RecA from Listeria seeligeri.